Here is a 456-residue protein sequence, read N- to C-terminus: Bifunctional protein GlmU (456 aa).

A pyrophosphorylase region spans residues 1–229; the sequence is MLNNAMSVVI…LSEVEGVNNR (229 aa). Residues 11 to 14, Lys25, Gln76, 81 to 82, 103 to 105, Gly140, Glu154, Asn169, and Asn227 each bind UDP-N-acetyl-alpha-D-glucosamine; these read LAAG, GT, and YGD. Asp105 provides a ligand contact to Mg(2+). Residue Asn227 coordinates Mg(2+). Residues 230 to 250 form a linker region; that stretch reads LQLSRLERVYQSEQAEKLLLA. Positions 251–456 are N-acetyltransferase; sequence GVMLRDPARF…EGWRRPVKKK (206 aa). Residues Arg333 and Lys351 each coordinate UDP-N-acetyl-alpha-D-glucosamine. Catalysis depends on His363, which acts as the Proton acceptor. UDP-N-acetyl-alpha-D-glucosamine contacts are provided by Tyr366 and Asn377. Residues Ala380, 386–387, Ser405, Ala423, and Arg440 contribute to the acetyl-CoA site; that span reads NY.

In the N-terminal section; belongs to the N-acetylglucosamine-1-phosphate uridyltransferase family. It in the C-terminal section; belongs to the transferase hexapeptide repeat family. Homotrimer. Requires Mg(2+) as cofactor.

The protein resides in the cytoplasm. The catalysed reaction is alpha-D-glucosamine 1-phosphate + acetyl-CoA = N-acetyl-alpha-D-glucosamine 1-phosphate + CoA + H(+). It catalyses the reaction N-acetyl-alpha-D-glucosamine 1-phosphate + UTP + H(+) = UDP-N-acetyl-alpha-D-glucosamine + diphosphate. It functions in the pathway nucleotide-sugar biosynthesis; UDP-N-acetyl-alpha-D-glucosamine biosynthesis; N-acetyl-alpha-D-glucosamine 1-phosphate from alpha-D-glucosamine 6-phosphate (route II): step 2/2. It participates in nucleotide-sugar biosynthesis; UDP-N-acetyl-alpha-D-glucosamine biosynthesis; UDP-N-acetyl-alpha-D-glucosamine from N-acetyl-alpha-D-glucosamine 1-phosphate: step 1/1. The protein operates within bacterial outer membrane biogenesis; LPS lipid A biosynthesis. Its function is as follows. Catalyzes the last two sequential reactions in the de novo biosynthetic pathway for UDP-N-acetylglucosamine (UDP-GlcNAc). The C-terminal domain catalyzes the transfer of acetyl group from acetyl coenzyme A to glucosamine-1-phosphate (GlcN-1-P) to produce N-acetylglucosamine-1-phosphate (GlcNAc-1-P), which is converted into UDP-GlcNAc by the transfer of uridine 5-monophosphate (from uridine 5-triphosphate), a reaction catalyzed by the N-terminal domain. The sequence is that of Bifunctional protein GlmU from Escherichia coli O6:K15:H31 (strain 536 / UPEC).